We begin with the raw amino-acid sequence, 151 residues long: Protein ripply1 (151 aa).

The WRPW motif signature appears at 57 to 60; that stretch reads WRPW. Residues 96–131 form a ripply homology domain region; the sequence is HPVRLFWPKSRSFDYLYSAGEILLQNFPVQATINLY. A disordered region spans residues 130-151; that stretch reads LYEDSDSEEEEEDEEQEDEEEK. Acidic residues predominate over residues 132–151; that stretch reads EDSDSEEEEEDEEQEDEEEK.

It belongs to the ripply family.

The protein localises to the nucleus. Functionally, plays a role in somitogenesis. Essential for transcriptional repression of the segmental patterning genes, thus terminating the segmentation program in the presomitic mesoderm, and also required for the maintenance of rostrocaudal polarity in somites. This Homo sapiens (Human) protein is Protein ripply1.